The chain runs to 184 residues: Ribosome-recycling factor (184 aa).

It belongs to the RRF family.

The protein resides in the cytoplasm. Responsible for the release of ribosomes from messenger RNA at the termination of protein biosynthesis. May increase the efficiency of translation by recycling ribosomes from one round of translation to another. The protein is Ribosome-recycling factor of Hyphomonas neptunium (strain ATCC 15444).